The following is a 158-amino-acid chain: Cyclic pyranopterin monophosphate synthase (158 aa).

Substrate is bound by residues 76–78 (LCH) and 114–115 (ME). Aspartate 129 is an active-site residue.

This sequence belongs to the MoaC family. Homohexamer; trimer of dimers.

It catalyses the reaction (8S)-3',8-cyclo-7,8-dihydroguanosine 5'-triphosphate = cyclic pyranopterin phosphate + diphosphate. The protein operates within cofactor biosynthesis; molybdopterin biosynthesis. Catalyzes the conversion of (8S)-3',8-cyclo-7,8-dihydroguanosine 5'-triphosphate to cyclic pyranopterin monophosphate (cPMP). This is Cyclic pyranopterin monophosphate synthase from Shewanella loihica (strain ATCC BAA-1088 / PV-4).